Here is a 71-residue protein sequence, read N- to C-terminus: Large ribosomal subunit protein bL31 (71 aa).

Residues cysteine 16, cysteine 18, cysteine 38, and cysteine 41 each contribute to the Zn(2+) site.

This sequence belongs to the bacterial ribosomal protein bL31 family. Type A subfamily. In terms of assembly, part of the 50S ribosomal subunit. Zn(2+) is required as a cofactor.

Its function is as follows. Binds the 23S rRNA. This chain is Large ribosomal subunit protein bL31, found in Neisseria gonorrhoeae (strain ATCC 700825 / FA 1090).